Reading from the N-terminus, the 183-residue chain is Dual-action ribosomal maturation protein DarP (183 aa).

The protein belongs to the DarP family.

The protein localises to the cytoplasm. Functionally, member of a network of 50S ribosomal subunit biogenesis factors which assembles along the 30S-50S interface, preventing incorrect 23S rRNA structures from forming. Promotes peptidyl transferase center (PTC) maturation. In Shigella flexneri serotype 5b (strain 8401), this protein is Dual-action ribosomal maturation protein DarP.